The primary structure comprises 209 residues: Imidazole glycerol phosphate synthase subunit HisH (209 aa).

A Glutamine amidotransferase type-1 domain is found at M1 to S205. C79 functions as the Nucleophile in the catalytic mechanism. Catalysis depends on residues H180 and E182.

As to quaternary structure, heterodimer of HisH and HisF.

The protein resides in the cytoplasm. The enzyme catalyses 5-[(5-phospho-1-deoxy-D-ribulos-1-ylimino)methylamino]-1-(5-phospho-beta-D-ribosyl)imidazole-4-carboxamide + L-glutamine = D-erythro-1-(imidazol-4-yl)glycerol 3-phosphate + 5-amino-1-(5-phospho-beta-D-ribosyl)imidazole-4-carboxamide + L-glutamate + H(+). It carries out the reaction L-glutamine + H2O = L-glutamate + NH4(+). It functions in the pathway amino-acid biosynthesis; L-histidine biosynthesis; L-histidine from 5-phospho-alpha-D-ribose 1-diphosphate: step 5/9. IGPS catalyzes the conversion of PRFAR and glutamine to IGP, AICAR and glutamate. The HisH subunit catalyzes the hydrolysis of glutamine to glutamate and ammonia as part of the synthesis of IGP and AICAR. The resulting ammonia molecule is channeled to the active site of HisF. The protein is Imidazole glycerol phosphate synthase subunit HisH of Bacillus cereus (strain AH187).